The following is a 366-amino-acid chain: Galactoside alpha-(1,2)-fucosyltransferase 1 (366 aa).

Residues Met-1–His-8 lie on the Cytoplasmic side of the membrane. A helical; Signal-anchor for type II membrane protein transmembrane segment spans residues Leu-9–Leu-25. The Lumenal portion of the chain corresponds to Ile-26–Pro-366. 3 N-linked (GlcNAc...) asparagine glycosylation sites follow: Asn-66, Asn-302, and Asn-328.

It belongs to the glycosyltransferase 11 family.

Its subcellular location is the golgi apparatus. The protein localises to the golgi stack membrane. The enzyme catalyses a beta-D-galactosyl-(1-&gt;4)-N-acetyl-beta-D-glucosaminyl derivative + GDP-beta-L-fucose = an alpha-L-Fuc-(1-&gt;2)-beta-D-Gal-(1-&gt;4)-beta-D-GlcNAc derivative + GDP + H(+). It catalyses the reaction a ganglioside GA1 + GDP-beta-L-fucose = a ganglioside Fuc-GA1 + GDP + H(+). The catalysed reaction is a beta-D-Gal-(1-&gt;3)-beta-D-GlcNAc-(1-&gt;3)-beta-D-Gal-(1-&gt;4)-beta-D-Glc-(1&lt;-&gt;1')-Cer(d18:1(4E)) + GDP-beta-L-fucose = alpha-L-fucosyl-(1-&gt;2)- beta-D-galactosyl-(1-&gt;3)-N-acetyl-beta-D-glucosaminyl-(1-&gt;3)-beta-D-galactosyl-(1-&gt;4)-beta-D-glucosyl-(1&lt;-&gt;1')-N-acylsphing-4-enine + GDP + H(+). It carries out the reaction a neolactoside nLc4Cer(d18:1(4E)) + GDP-beta-L-fucose = a neolactoside IV(2)-alpha-Fuc-nLc4Cer(d18:1(4E)) + GDP + H(+). The enzyme catalyses a ganglioside GM1 + GDP-beta-L-fucose = a ganglioside Fuc-GM1 + GDP + H(+). It catalyses the reaction beta-D-galactosyl-(1-&gt;3)-N-acetyl-D-galactosamine + GDP-beta-L-fucose = alpha-L-fucosyl-(1-&gt;2)-beta-D-galactosyl-(1-&gt;3)-N-acetyl-D-galactosamine + GDP + H(+). It participates in protein modification; protein glycosylation. Functionally, catalyzes the transfer of L-fucose, from a guanosine diphosphate-beta-L-fucose, to the terminal galactose residue of glycoconjugates through an alpha(1,2) linkage leading to H antigen synthesis that is an intermediate substrate in the synthesis of ABO blood group antigens. H antigen is essential for maturation of the glomerular layer of the main olfactory bulb, in cell migration and early cell-cell contacts during tumor associated angiogenesis. Preferentially fucosylates soluble lactose and to a lesser extent fucosylates glycolipids gangliosides GA1 and GM1a. In Saimiri boliviensis boliviensis (Bolivian squirrel monkey), this protein is Galactoside alpha-(1,2)-fucosyltransferase 1.